The primary structure comprises 75 residues: Small ribosomal subunit protein bS18 (75 aa).

The protein belongs to the bacterial ribosomal protein bS18 family. Part of the 30S ribosomal subunit. Forms a tight heterodimer with protein bS6.

In terms of biological role, binds as a heterodimer with protein bS6 to the central domain of the 16S rRNA, where it helps stabilize the platform of the 30S subunit. The sequence is that of Small ribosomal subunit protein bS18 from Legionella pneumophila (strain Paris).